A 210-amino-acid polypeptide reads, in one-letter code: Redox-sensing transcriptional repressor Rex (210 aa).

The H-T-H motif DNA-binding region spans 17–56; sequence KYHRYLNELMKNDVDRISSKELGEKIGFTASQIRQDLNCF. Residue 91 to 96 coordinates NAD(+); the sequence is GAGNIG.

The protein belongs to the transcriptional regulatory Rex family. In terms of assembly, homodimer.

The protein localises to the cytoplasm. Its function is as follows. Modulates transcription in response to changes in cellular NADH/NAD(+) redox state. The polypeptide is Redox-sensing transcriptional repressor Rex (Clostridium botulinum (strain Eklund 17B / Type B)).